The following is a 97-amino-acid chain: Putative regulatory protein Dole_1911 (97 aa).

This sequence belongs to the RemA family.

This is Putative regulatory protein Dole_1911 from Desulfosudis oleivorans (strain DSM 6200 / JCM 39069 / Hxd3) (Desulfococcus oleovorans).